Consider the following 163-residue polypeptide: Epithelial membrane protein 3 (163 aa).

Residues 4–24 (LLLVVSALHILILILLFVATL) form a helical membrane-spanning segment. 2 N-linked (GlcNAc...) asparagine glycosylation sites follow: Asn47 and Asn56. 3 helical membrane-spanning segments follow: residues 66–86 (VQVL…LFMF), 100–120 (TGLC…IYAI), and 139–159 (FALA…YIHL).

Belongs to the PMP-22/EMP/MP20 family.

Its subcellular location is the membrane. Probably involved in cell proliferation and cell-cell interactions. The protein is Epithelial membrane protein 3 (EMP3) of Homo sapiens (Human).